Consider the following 152-residue polypeptide: Ribosome maturation factor RimP (152 aa).

The protein belongs to the RimP family.

Its subcellular location is the cytoplasm. Required for maturation of 30S ribosomal subunits. The polypeptide is Ribosome maturation factor RimP (Francisella tularensis subsp. tularensis (strain FSC 198)).